The chain runs to 332 residues: Adenosine receptor A2b (332 aa).

At 1–8 (MPLEAQDA) the chain is on the extracellular side. Residues 9–33 (VYVALELALAALSVTGNVLVCAAVG) form a helical membrane-spanning segment. Residues 34 to 43 (TSSALQTPTN) are Cytoplasmic-facing. A helical transmembrane segment spans residues 44–67 (YFLVSLAAADVAVGLFAIPFAVTI). Over 68–78 (SLGFCTDFHSC) the chain is Extracellular. A disulfide bond links C78 and C170. Residues 79 to 101 (LFLACFVLVLTQSSIFSLLAVAV) form a helical membrane-spanning segment. Residues 102–121 (DRYLAVRVPLRYKSLVTGAR) are Cytoplasmic-facing. The chain crosses the membrane as a helical span at residues 122–144 (ARGVIAALWVLAFGIGLTPFLGW). The Extracellular segment spans residues 145–177 (NDRKIATNCTEPGDAATNVSCCLIRCLFENVVP). N152 and N162 each carry an N-linked (GlcNAc...) asparagine glycan. E173 lines the adenosine pocket. Residues 178-202 (MSYMVYFNFFGCVLPPLLIMLVIYV) form a helical membrane-spanning segment. The Cytoplasmic portion of the chain corresponds to 203–234 (KIFLVACRQLQRTELMDHSRTVLQREIHAAKS). The chain crosses the membrane as a helical span at residues 235-258 (LALIVGIFALCWLPVHTINCASLF). N253 contacts adenosine. At 259–266 (QPTWAKVK) the chain is on the extracellular side. The chain crosses the membrane as a helical span at residues 267–290 (PKWAINTAILLSHANSAVNPIVYA). Residues S278 and H279 each coordinate adenosine. At 291–332 (YRNRDFRYTFHKIISRYILCRTHILKSGEGQVGSQPTLQLGL) the chain is on the cytoplasmic side. The S-palmitoyl cysteine moiety is linked to residue C310.

It belongs to the G-protein coupled receptor 1 family.

The protein resides in the cell membrane. Receptor for adenosine. The activity of this receptor is mediated by G proteins which activate adenylyl cyclase. This Bos taurus (Bovine) protein is Adenosine receptor A2b (ADORA2B).